The primary structure comprises 150 residues: Cytochrome c oxidase subunit 5A, mitochondrial (150 aa).

Residues 1 to 41 (MLGAALRRCAVAATTRAGPRGLLHSARTPGPAAAIQSVRCX) constitute a mitochondrion transit peptide. The short motif at 2-17 (LGAALRRCAVAATTRA) is the SIFI-degron element. N6-acetyllysine occurs at positions 87 and 113. Thr141 carries the post-translational modification Phosphothreonine.

This sequence belongs to the cytochrome c oxidase subunit 5A family. In terms of assembly, component of the cytochrome c oxidase (complex IV, CIV), a multisubunit enzyme composed of 14 subunits. The complex is composed of a catalytic core of 3 subunits MT-CO1, MT-CO2 and MT-CO3, encoded in the mitochondrial DNA, and 11 supernumerary subunits COX4I, COX5A, COX5B, COX6A, COX6B, COX6C, COX7A, COX7B, COX7C, COX8 and NDUFA4, which are encoded in the nuclear genome. The complex exists as a monomer or a dimer and forms supercomplexes (SCs) in the inner mitochondrial membrane with NADH-ubiquinone oxidoreductase (complex I, CI) and ubiquinol-cytochrome c oxidoreductase (cytochrome b-c1 complex, complex III, CIII), resulting in different assemblies (supercomplex SCI(1)III(2)IV(1) and megacomplex MCI(2)III(2)IV(2)). Interacts with AFG1L. Interacts with RAB5IF. In response to mitochondrial stress, the precursor protein is ubiquitinated by the SIFI complex in the cytoplasm before mitochondrial import, leading to its degradation. Within the SIFI complex, UBR4 initiates ubiquitin chain that are further elongated or branched by KCMF1.

It is found in the mitochondrion inner membrane. It participates in energy metabolism; oxidative phosphorylation. Functionally, component of the cytochrome c oxidase, the last enzyme in the mitochondrial electron transport chain which drives oxidative phosphorylation. The respiratory chain contains 3 multisubunit complexes succinate dehydrogenase (complex II, CII), ubiquinol-cytochrome c oxidoreductase (cytochrome b-c1 complex, complex III, CIII) and cytochrome c oxidase (complex IV, CIV), that cooperate to transfer electrons derived from NADH and succinate to molecular oxygen, creating an electrochemical gradient over the inner membrane that drives transmembrane transport and the ATP synthase. Cytochrome c oxidase is the component of the respiratory chain that catalyzes the reduction of oxygen to water. Electrons originating from reduced cytochrome c in the intermembrane space (IMS) are transferred via the dinuclear copper A center (CU(A)) of subunit 2 and heme A of subunit 1 to the active site in subunit 1, a binuclear center (BNC) formed by heme A3 and copper B (CU(B)). The BNC reduces molecular oxygen to 2 water molecules using 4 electrons from cytochrome c in the IMS and 4 protons from the mitochondrial matrix. The chain is Cytochrome c oxidase subunit 5A, mitochondrial (COX5A) from Pan paniscus (Pygmy chimpanzee).